We begin with the raw amino-acid sequence, 408 residues long: MAKTRPKVLSIVLAGGEGKRLMPLTMDRAKPAVPFGGTYRLIDFVLSNLANSGLTQIAVLTQYKSHSLDRHISITWRMSTMLGSYVTPVPAQQRLGPRWYQGSADAIYQSLNLINDQSPDYVVVFGADNIYRMDVDAMLQYHIDSGLGCTVAGIRVPRKDASAFGIIDADQNHKITEFLEKPADPPGLPDASDESFASMGNYIFSREALVQALHDDAHSADSRHDMGGDVIPRFVNAADAQVYDFRDNEVPGNTEKDADYWRDVGTIDAYHDAHMDLVSVEPEFNLYNPDWPIWTMQEQAPGAKFVMRGSCDDTLVSAGCIISGTDIYRTVLGPRARIERWARVDESIVMNNVAIGSNATVHRAILDKNVIVPDGAQVGVDHDHDRARGFTVSPGGVTVVGKGITVPY.

Residues Tyr100, Gly165, 180-181 (EK), and Ser198 each bind alpha-D-glucose 1-phosphate.

Belongs to the bacterial/plant glucose-1-phosphate adenylyltransferase family. As to quaternary structure, homotetramer.

The enzyme catalyses alpha-D-glucose 1-phosphate + ATP + H(+) = ADP-alpha-D-glucose + diphosphate. The protein operates within glycan biosynthesis; glycogen biosynthesis. Involved in the biosynthesis of ADP-glucose, a building block required for the elongation reactions to produce glycogen. Catalyzes the reaction between ATP and alpha-D-glucose 1-phosphate (G1P) to produce pyrophosphate and ADP-Glc. This is Glucose-1-phosphate adenylyltransferase from Cutibacterium acnes (strain DSM 16379 / KPA171202) (Propionibacterium acnes).